The sequence spans 62 residues: Large ribosomal subunit protein uL30 (62 aa).

Belongs to the universal ribosomal protein uL30 family. As to quaternary structure, part of the 50S ribosomal subunit.

In Geobacillus thermodenitrificans (strain NG80-2), this protein is Large ribosomal subunit protein uL30.